Reading from the N-terminus, the 335-residue chain is Pyridoxal 5'-phosphate synthase subunit PdxS (335 aa).

Asp-30 contacts D-ribose 5-phosphate. Lys-87 (schiff-base intermediate with D-ribose 5-phosphate) is an active-site residue. Gly-159 contacts D-ribose 5-phosphate. Arg-171 contributes to the D-glyceraldehyde 3-phosphate binding site. Residues Gly-257 and 278–279 (GS) each bind D-ribose 5-phosphate.

Belongs to the PdxS/SNZ family. In the presence of PdxT, forms a dodecamer of heterodimers.

The catalysed reaction is aldehydo-D-ribose 5-phosphate + D-glyceraldehyde 3-phosphate + L-glutamine = pyridoxal 5'-phosphate + L-glutamate + phosphate + 3 H2O + H(+). It participates in cofactor biosynthesis; pyridoxal 5'-phosphate biosynthesis. Catalyzes the formation of pyridoxal 5'-phosphate from ribose 5-phosphate (RBP), glyceraldehyde 3-phosphate (G3P) and ammonia. The ammonia is provided by the PdxT subunit. Can also use ribulose 5-phosphate and dihydroxyacetone phosphate as substrates, resulting from enzyme-catalyzed isomerization of RBP and G3P, respectively. In Thermococcus gammatolerans (strain DSM 15229 / JCM 11827 / EJ3), this protein is Pyridoxal 5'-phosphate synthase subunit PdxS.